We begin with the raw amino-acid sequence, 334 residues long: MQEIEKLRILQTEREALKNRNRVIEHEKKTEDHTESVCPECKSRQLVHDYERAELVCQNCGLVIDDDFIDRGPEWRAFDHDQRMKRSRVGAPMTFTIHDKGLSTMIDWRNRDSYGRAISSKNRAQLYRLRKWQRRIRVSNATERNLAFALSELDRMASALGLPRNVRETAAVVYRDAVDKNLIRGRSIEGVAAAALYAACRQCSVPRTLDEIAEVSRVSRKEIGRTYRFISRELGLKLLPTSPIDYVPRFCSGLTLKGEVQSRAVEILRQAAERELTSGRGPTGVAAAAIYISSILGGERRTQREVAEVAGVTEVTIRNRYKELAEKLDIEIIL.

The TFIIB-type zinc-finger motif lies at 34-65 (TESVCPECKSRQLVHDYERAELVCQNCGLVID). Residues C38, C41, C57, and C60 each contribute to the Zn(2+) site. Tandem repeats lie at residues 151 to 234 (SELD…SREL) and 245 to 326 (DYVP…ELAE).

It belongs to the TFIIB family.

Stabilizes TBP binding to an archaeal box-A promoter. Also responsible for recruiting RNA polymerase II to the pre-initiation complex (DNA-TBP-TFIIB). This chain is Transcription initiation factor IIB, found in Methanosphaerula palustris (strain ATCC BAA-1556 / DSM 19958 / E1-9c).